The chain runs to 209 residues: Cytochrome bo(3) ubiquinol oxidase subunit 3 (209 aa).

The Cytoplasmic portion of the chain corresponds to 1 to 29 (MSTAVLNKHLADAHEVGHDHDHAHDSGGN). Residues 30 to 50 (TVFGFWLYLMTDCVLFASVFA) form a helical membrane-spanning segment. The Periplasmic segment spans residues 51 to 72 (TYAVLVHHTAGGPSGKDIFELP). The helical transmembrane segment at 73–93 (YVLVETAILLVSSCTYGLAML) threads the bilayer. Over 94–102 (SAHKGAKGQ) the chain is Cytoplasmic. The helical transmembrane segment at 103-123 (AIAWLGVTFLLGAAFIGMEIN) threads the bilayer. Topologically, residues 124–143 (EFHHLIAEGFGPSRSAFLSS) are periplasmic. The chain crosses the membrane as a helical span at residues 144 to 164 (FFTLVGMHGLHVSAGLLWMLV). The Cytoplasmic portion of the chain corresponds to 165 to 186 (LMAQIWTRGLTAQNNTRMMCLS). The helical transmembrane segment at 187–207 (LFWHFLDIVWICVFTVVYLMG) threads the bilayer. Residues 208–209 (AL) are Periplasmic-facing.

The protein belongs to the cytochrome c oxidase subunit 3 family. In terms of assembly, heterooctamer of two A chains, two B chains, two C chains and two D chains.

The protein resides in the cell inner membrane. Its function is as follows. Cytochrome bo(3) ubiquinol terminal oxidase is the component of the aerobic respiratory chain of E.coli that predominates when cells are grown at high aeration. Has proton pump activity across the membrane in addition to electron transfer, pumping 2 protons/electron. This chain is Cytochrome bo(3) ubiquinol oxidase subunit 3 (cyoC), found in Pseudomonas aeruginosa (strain ATCC 15692 / DSM 22644 / CIP 104116 / JCM 14847 / LMG 12228 / 1C / PRS 101 / PAO1).